Here is a 259-residue protein sequence, read N- to C-terminus: 3-dehydroquinate dehydratase (259 aa).

Residues 50–52 (EWR) and R86 each bind 3-dehydroquinate. H147 functions as the Proton donor/acceptor in the catalytic mechanism. K174 functions as the Schiff-base intermediate with substrate in the catalytic mechanism. Residues R216, S235, and Q239 each coordinate 3-dehydroquinate.

The protein belongs to the type-I 3-dehydroquinase family. In terms of assembly, homodimer.

The catalysed reaction is 3-dehydroquinate = 3-dehydroshikimate + H2O. It participates in metabolic intermediate biosynthesis; chorismate biosynthesis; chorismate from D-erythrose 4-phosphate and phosphoenolpyruvate: step 3/7. Involved in the third step of the chorismate pathway, which leads to the biosynthesis of aromatic amino acids. Catalyzes the cis-dehydration of 3-dehydroquinate (DHQ) and introduces the first double bond of the aromatic ring to yield 3-dehydroshikimate. The sequence is that of 3-dehydroquinate dehydratase from Geobacillus sp. (strain WCH70).